A 591-amino-acid chain; its full sequence is Frizzled-9 (591 aa).

Positions 1–22 (MAVAPLRGALLLWQLLAAGGAA) are cleaved as a signal peptide. Over 23 to 229 (LEIGRFDPER…EVFWSRRDKD (207 aa)) the chain is Extracellular. In terms of domain architecture, FZ spans 34–155 (RGAAPCQAVE…NDPHALCMEA (122 aa)). Intrachain disulfides connect cysteine 39–cysteine 100, cysteine 47–cysteine 93, cysteine 84–cysteine 122, cysteine 111–cysteine 152, and cysteine 115–cysteine 139. Asparagine 53 carries an N-linked (GlcNAc...) asparagine glycan. A required for Wnt-activated receptor activity region spans residues 58-172 (PNLLGHTSQG…PAEPHKGLGM (115 aa)). A glycan (N-linked (GlcNAc...) asparagine) is linked at asparagine 158. Residues 230 to 250 (FALVWMAVWSALCFFSTAFTV) traverse the membrane as a helical segment. Residues 251 to 266 (LTFLLEPHRFQYPERP) lie on the Cytoplasmic side of the membrane. A helical transmembrane segment spans residues 267-287 (IIFLSMCYNVYSLAFLIRAVA). Residues 288 to 315 (GAQSVACDQEAGALYVIQEGLENTGCTL) lie on the Extracellular side of the membrane. The helical transmembrane segment at 316-336 (VFLLLYYFGMASSLWWVVLTL) threads the bilayer. Residues 337-355 (TWFLAAGKKWGHEAIEAHG) are Cytoplasmic-facing. Residues 356–376 (SYFHMAAWGLPALKTIVILTL) form a helical membrane-spanning segment. The Extracellular segment spans residues 377-400 (RKVAGDELTGLCYVASTDAAALTG). Residues 401 to 421 (FVLVPLSGYLVLGSSFLLTGF) traverse the membrane as a helical segment. Residues 422 to 447 (VALFHIRKIMKTGGTNTEKLEKLMVK) lie on the Cytoplasmic side of the membrane. The chain crosses the membrane as a helical span at residues 448–468 (IGVFSILYTVPATCVIVCYVY). Residues 469-508 (ERLNMDFWRLRATEQPCAAAAGPGGRRDCSLPGGSVPTVA) lie on the Extracellular side of the membrane. The chain crosses the membrane as a helical span at residues 509–529 (VFMLKIFMSLVVGITSGVWVW). The Cytoplasmic portion of the chain corresponds to 530–591 (SSKTFQTWQS…DPSLENPTHL (62 aa)). Residues 532–537 (KTFQTW) carry the Lys-Thr-X-X-X-Trp motif, mediates interaction with the PDZ domain of Dvl family members motif. Residues 554–591 (ACRAPGSYGRGTHCHYKAPTVVLHMTKTDPSLENPTHL) are required for CTNNB1 accumulation and TCF transcription factor activity.

It belongs to the G-protein coupled receptor Fz/Smo family. Ubiquitinated by ZNRF3, leading to its degradation by the proteasome. In terms of tissue distribution, expressed predominantly in adult and fetal brain, testis, eye, skeletal muscle and kidney. Moderately expressed in pancreas, thyroid, adrenal cortex, small intestine and stomach. Detected in fetal liver and kidney. Expressed in neural progenitor cells.

The protein resides in the cell membrane. In terms of biological role, receptor for WNT2 that is coupled to the beta-catenin canonical signaling pathway, which leads to the activation of disheveled proteins, inhibition of GSK-3 kinase, nuclear accumulation of beta-catenin and activation of Wnt target genes. Plays a role in neuromuscular junction (NMJ) assembly by negatively regulating the clustering of acetylcholine receptors (AChR) through the beta-catenin canonical signaling pathway. May play a role in neural progenitor cells (NPCs) viability through the beta-catenin canonical signaling pathway by negatively regulating cell cycle arrest leading to inhibition of neuron apoptotic process. During hippocampal development, regulates neuroblast proliferation and apoptotic cell death. Controls bone formation through non canonical Wnt signaling mediated via ISG15. Positively regulates bone regeneration through non canonical Wnt signaling. In Homo sapiens (Human), this protein is Frizzled-9 (FZD9).